Reading from the N-terminus, the 253-residue chain is Tryptophan synthase alpha chain (253 aa).

Residues Glu-45 and Asp-56 each act as proton acceptor in the active site.

This sequence belongs to the TrpA family. As to quaternary structure, tetramer of two alpha and two beta chains.

It catalyses the reaction (1S,2R)-1-C-(indol-3-yl)glycerol 3-phosphate + L-serine = D-glyceraldehyde 3-phosphate + L-tryptophan + H2O. The protein operates within amino-acid biosynthesis; L-tryptophan biosynthesis; L-tryptophan from chorismate: step 5/5. The alpha subunit is responsible for the aldol cleavage of indoleglycerol phosphate to indole and glyceraldehyde 3-phosphate. This chain is Tryptophan synthase alpha chain, found in Flavobacterium psychrophilum (strain ATCC 49511 / DSM 21280 / CIP 103535 / JIP02/86).